A 360-amino-acid chain; its full sequence is Protein DVR-1 (360 aa).

Positions 1–16 (MVWLRLWAFLHILAIV) are cleaved as a signal peptide. The propeptide occupies 17 to 246 (TLDPELKRRE…LRCKRPRRKR (230 aa)). N-linked (GlcNAc...) asparagine glycosylation is found at Asn113, Asn181, and Asn301. Disulfide bonds link Cys259-Cys325, Cys288-Cys357, and Cys292-Cys359.

This sequence belongs to the TGF-beta family. Homodimer. As to expression, vegetal region of the egg.

The protein localises to the secreted. In terms of biological role, serves to facilitate the differentiation of either mesoderm or endoderm either as a cofactor in an instructive signal or by providing permissive environment. The protein is Protein DVR-1 (dvr1) of Xenopus laevis (African clawed frog).